A 434-amino-acid chain; its full sequence is D-amino acid dehydrogenase (434 aa).

An FAD-binding site is contributed by 3–17 (VIVLGSGVIGTTTAY).

It belongs to the DadA oxidoreductase family. FAD is required as a cofactor.

It carries out the reaction a D-alpha-amino acid + A + H2O = a 2-oxocarboxylate + AH2 + NH4(+). Functionally, oxidative deamination of D-amino acids. In Bordetella parapertussis (strain 12822 / ATCC BAA-587 / NCTC 13253), this protein is D-amino acid dehydrogenase.